The following is a 372-amino-acid chain: 3-dehydroquinate synthase (372 aa).

Residues 113 to 117 (GVIGD), 137 to 138 (TS), K150, K159, and 177 to 180 (TLKT) each bind NAD(+). E192, H257, and H274 together coordinate Zn(2+).

It belongs to the sugar phosphate cyclases superfamily. Dehydroquinate synthase family. It depends on Co(2+) as a cofactor. Zn(2+) is required as a cofactor. Requires NAD(+) as cofactor.

The protein resides in the cytoplasm. It carries out the reaction 7-phospho-2-dehydro-3-deoxy-D-arabino-heptonate = 3-dehydroquinate + phosphate. The protein operates within metabolic intermediate biosynthesis; chorismate biosynthesis; chorismate from D-erythrose 4-phosphate and phosphoenolpyruvate: step 2/7. In terms of biological role, catalyzes the conversion of 3-deoxy-D-arabino-heptulosonate 7-phosphate (DAHP) to dehydroquinate (DHQ). The sequence is that of 3-dehydroquinate synthase from Acaryochloris marina (strain MBIC 11017).